Consider the following 710-residue polypeptide: MTNFFNRSPKHQSHHYQPHQQDVTDISYSMENVSISSNAMMDIDTSYRSSKPTYNNPQQQQQQQQQQQAQNNLFNKENITPLNSPTKSILHNSPQQAKSSTSPQHLYNKLVNANYNGNSPQPGIQQQQNNRALQNNINQLQPPLNKRYKLTEAEFYAKANSARTKRLTSIAQLYFLDYYCDMFDYVINRRERTAIVEKNLLTDPMYKNDITKQQFEWKNYIGRERALLRKRRLKPKHKDFEMITQIGQGGYGQVFLSRKRDTREICALKILNKKLLIKLDETRHVLTERDILTNTRSDWLVKLLYAFQDQEKVFLAMEFVPGGDFRTLLNNTGYLIPPHARFYISEMFAAVNSLHELGFTHRDLKPENFLIDSKGHIKLTDFGLAAGTVCNDRIESMKIKLQNLQNLNDFNDDSNNDNHHYQVPSSLIYERQKIFKQSQQQQQQQNSNNTTANSIVGSPDYMALEVLEGKNYNYTIDYWSLGCMLFEALCGYPPFSGSKQDETYYNLKHWKTALRRPQTKDGRYVFSDRTWNLIIKLIASPNNRLQNFKQVQQQSYFSDIKDWGNLRQKTPPFTPQLDNEEDAGYFDDFEDDEMMMKYKDVFARQEQNEQLLEKSNTTTTTTTTTTTKNGKRFSPGSKFNDNFIGFTFKHKSNPNNKFTNGSGNTGRYGNGNGNNNNNGEINLLNMVENGNGIGNGNSRSSRLNPLATLY.

Disordered regions lie at residues 1–20 and 46–103; these read MTNF…QPHQ and SYRS…STSP. A compositionally biased stretch (basic residues) spans 8–17; that stretch reads SPKHQSHHYQ. Residues 46–57 are compositionally biased toward polar residues; sequence SYRSSKPTYNNP. Residues 58–70 are compositionally biased toward low complexity; the sequence is QQQQQQQQQQQAQ. Over residues 71 to 103 the composition is skewed to polar residues; sequence NNLFNKENITPLNSPTKSILHNSPQQAKSSTSP. One can recognise a Protein kinase domain in the interval 240 to 557; it reads FEMITQIGQG…FKQVQQQSYF (318 aa). ATP is bound by residues 246-254 and lysine 269; that span reads IGQGGYGQV. Aspartate 363 (proton acceptor) is an active-site residue. Residues 559–658 enclose the AGC-kinase C-terminal domain; the sequence is DIKDWGNLRQ…KHKSNPNNKF (100 aa). Disordered stretches follow at residues 613 to 636 and 651 to 674; these read EKSN…FSPG and KSNP…GNGN. Positions 617–627 are enriched in low complexity; it reads TTTTTTTTTTT. Gly residues predominate over residues 663 to 672; sequence GNTGRYGNGN. 696–703 serves as a coordination point for ATP; that stretch reads GNSRSSRL.

Belongs to the protein kinase superfamily. Ser/Thr protein kinase family.

It is found in the cytoplasm. It localises to the cytoskeleton. Its subcellular location is the microtubule organizing center. The protein localises to the spindle pole body. The protein resides in the spindle. It is found in the nucleus. It localises to the bud neck. The catalysed reaction is L-seryl-[protein] + ATP = O-phospho-L-seryl-[protein] + ADP + H(+). The enzyme catalyses L-threonyl-[protein] + ATP = O-phospho-L-threonyl-[protein] + ADP + H(+). Ser/Thr-protein kinase involved in the mitotic exit network (MEN) and required after the metaphase to anaphase cell cycle transition. Required for proper nuclear segregation, mitotic spindle organization, actomyosin ring contraction, primary septum assembly, and normal hyphal morphogenesis. The polypeptide is Cell cycle protein kinase DBF2 (DBF2) (Candida albicans (strain SC5314 / ATCC MYA-2876) (Yeast)).